We begin with the raw amino-acid sequence, 567 residues long: UPF0313 protein CTN_0332 (567 aa).

A Radical SAM core domain is found at 288–560 (KAIETVKFSI…NKMKENVLFK (273 aa)). [4Fe-4S] cluster-binding residues include Cys-303, Cys-307, and Cys-310.

It belongs to the UPF0313 family. Requires [4Fe-4S] cluster as cofactor.

The polypeptide is UPF0313 protein CTN_0332 (Thermotoga neapolitana (strain ATCC 49049 / DSM 4359 / NBRC 107923 / NS-E)).